The sequence spans 504 residues: Sperm motility kinase 2A (504 aa).

The Protein kinase domain occupies 28–276 (YEMLGTIGHG…VAEVMMHPWV (249 aa)). ATP contacts are provided by residues 34–42 (IGHGGSTKV) and Lys57. Catalysis depends on Asp147, which acts as the Proton acceptor. The UBA domain maps to 294–334 (KPDPAIVKAMGHIGFQAQDIEDSLRQRKFNETMASYCLLKK). Composition is skewed to polar residues over residues 376–393 (PTSL…CGRS) and 443–454 (SDESTEGHTSAS). Disordered regions lie at residues 376–403 (PTSL…RSFS) and 443–469 (SDES…PRGI).

The protein belongs to the protein kinase superfamily. CAMK Ser/Thr protein kinase family. Smok subfamily. Testis-specific. Expressed in the testis from 22 days postpartum (22 dpp).

The catalysed reaction is L-seryl-[protein] + ATP = O-phospho-L-seryl-[protein] + ADP + H(+). It catalyses the reaction L-threonyl-[protein] + ATP = O-phospho-L-threonyl-[protein] + ADP + H(+). Functionally, may play a role in sperm motility, especially in the regulation of flagellar function. The protein is Sperm motility kinase 2A (Smok2a) of Mus musculus (Mouse).